The primary structure comprises 484 residues: tRNA-2-methylthio-N(6)-dimethylallyladenosine synthase (484 aa).

In terms of domain architecture, MTTase N-terminal spans 29–149; it reads GVFHIHTLGC…LPKLLDQNRA (121 aa). [4Fe-4S] cluster contacts are provided by Cys38, Cys78, Cys112, Cys186, Cys190, and Cys193. Residues 172 to 401 enclose the Radical SAM core domain; sequence RASRISSWVA…VALQEQITEE (230 aa). In terms of domain architecture, TRAM spans 404-474; that stretch reads ATFEGRDVEV…RHNLLADPDV (71 aa).

It belongs to the methylthiotransferase family. MiaB subfamily. In terms of assembly, monomer. Requires [4Fe-4S] cluster as cofactor.

The protein localises to the cytoplasm. It catalyses the reaction N(6)-dimethylallyladenosine(37) in tRNA + (sulfur carrier)-SH + AH2 + 2 S-adenosyl-L-methionine = 2-methylsulfanyl-N(6)-dimethylallyladenosine(37) in tRNA + (sulfur carrier)-H + 5'-deoxyadenosine + L-methionine + A + S-adenosyl-L-homocysteine + 2 H(+). Catalyzes the methylthiolation of N6-(dimethylallyl)adenosine (i(6)A), leading to the formation of 2-methylthio-N6-(dimethylallyl)adenosine (ms(2)i(6)A) at position 37 in tRNAs that read codons beginning with uridine. The protein is tRNA-2-methylthio-N(6)-dimethylallyladenosine synthase of Bifidobacterium longum subsp. infantis (strain ATCC 15697 / DSM 20088 / JCM 1222 / NCTC 11817 / S12).